The sequence spans 382 residues: Putative glutamate--cysteine ligase 2-1 (382 aa).

This sequence belongs to the glutamate--cysteine ligase type 2 family. YbdK subfamily.

It carries out the reaction L-cysteine + L-glutamate + ATP = gamma-L-glutamyl-L-cysteine + ADP + phosphate + H(+). ATP-dependent carboxylate-amine ligase which exhibits weak glutamate--cysteine ligase activity. This chain is Putative glutamate--cysteine ligase 2-1, found in Nocardioides sp. (strain ATCC BAA-499 / JS614).